The following is a 271-amino-acid chain: MTVLVAAQQTETPDPLPSRQARLAYRGGEVGSTAGVAPGFVQGNLAILPAEYASAFHRFCQLNPKPCPIIGMSDVGSPHIPALGADLDIRTDVPRYRVWRDGEVVDEPTDVTGYWRDDLVTFVLGCSFSFEEALLDEGMPIRHIEQNVRVPMYRTNIACGEAGPFAGPMVVSMRPFKPADAIRAVQITSRYPAVHGAPVHLGHPHLIGIKDIAKPDYGDPVPVADDEIPVFWACGVTPQSVINAARLPFAITHSPGLMLVTDLKNRTMAVI.

Belongs to the D-glutamate cyclase family.

The protein is Putative hydro-lyase blr2921 of Bradyrhizobium diazoefficiens (strain JCM 10833 / BCRC 13528 / IAM 13628 / NBRC 14792 / USDA 110).